Here is a 314-residue protein sequence, read N- to C-terminus: Lysophospholipase D GDPD1 (314 aa).

Residues 1–3 lie on the Extracellular side of the membrane; sequence MSS. Residues 4–24 traverse the membrane as a helical segment; the sequence is TAAFCLLSTLGGYLVTSFLLL. Over 25-195 the chain is Cytoplasmic; the sequence is KYPALLHQRK…VDKCYKENSD (171 aa). Residues 40-309 enclose the GP-PDE domain; sequence SRHISHRGGA…DYPTKLKEFL (270 aa). A divalent metal cation-binding residues include Glu72, Asp74, and His87. Residues 196 to 216 form a helical membrane-spanning segment; the sequence is IPILFSLQRVLLILGLFFTGL. The Extracellular portion of the chain corresponds to 217–314; that stretch reads LPFVPIREQF…LKEFLNNMSA (98 aa).

The protein belongs to the glycerophosphoryl diester phosphodiesterase family.

The protein resides in the cytoplasm. The protein localises to the membrane. It is found in the perinuclear region. It localises to the endoplasmic reticulum. It carries out the reaction a 1-O-alkyl-sn-glycero-3-phosphocholine + H2O = a 1-O-alkyl-sn-glycero-3-phosphate + choline + H(+). The enzyme catalyses 1-hexadecanoyl-sn-glycero-3-phosphocholine + H2O = 1-hexadecanoyl-sn-glycero-3-phosphate + choline + H(+). It catalyses the reaction 1-hexadecanoyl-sn-glycero-3-phosphoethanolamine + H2O = 1-hexadecanoyl-sn-glycero-3-phosphate + ethanolamine + H(+). The catalysed reaction is N-hexadecanoyl-sn-glycero-3-phosphoethanolamine + H2O = N-hexadecanoylethanolamine + sn-glycerol 3-phosphate + H(+). It carries out the reaction N-(5Z,8Z,11Z,14Z-eicosatetraenoyl)-1-(9Z-octadecenoyl)-sn-glycero-3-phosphoethanolamine + H2O = N-(5Z,8Z,11Z,14Z-eicosatetraenoyl)-ethanolamine + 1-(9Z-octadecenoyl)-sn-glycero-3-phosphate + H(+). The enzyme catalyses N,1-di-(9Z-octadecenoyl)-sn-glycero-3-phosphoethanolamine + H2O = N-(9Z-octadecenoyl) ethanolamine + 1-(9Z-octadecenoyl)-sn-glycero-3-phosphate + H(+). It catalyses the reaction N-hexadecanoyl-1-(9Z-octadecenoyl)-sn-glycero-3-phosphoethanolamine + H2O = N-hexadecanoylethanolamine + 1-(9Z-octadecenoyl)-sn-glycero-3-phosphate + H(+). The catalysed reaction is 1-O-hexadecyl-sn-glycero-3-phosphocholine + H2O = 1-O-hexadecyl-sn-glycero-3-phosphate + choline + H(+). It carries out the reaction 1-(9Z-octadecenoyl)-sn-glycero-3-phosphocholine + H2O = 1-(9Z-octadecenoyl)-sn-glycero-3-phosphate + choline + H(+). The enzyme catalyses N,1-dihexadecanoyl-sn-glycero-3-phosphoethanolamine + H2O = N-hexadecanoylethanolamine + 1-hexadecanoyl-sn-glycero-3-phosphate + H(+). It catalyses the reaction 1-O-(1Z-octadecenyl)-sn-glycero-3-phospho-(N-5Z,8Z,11Z,14Z-eicosatetraenoyl)-ethanolamine + H2O = 1-O-(1Z-octadecenyl)-sn-glycero-3-phosphate + N-(5Z,8Z,11Z,14Z-eicosatetraenoyl)-ethanolamine + H(+). The catalysed reaction is 1-O-(1Z-octadecenyl)-sn-glycero-3-phospho-(N-9Z-octadecenoyl)-ethanolamine + H2O = 1-O-(1Z-octadecenyl)-sn-glycero-3-phosphate + N-(9Z-octadecenoyl) ethanolamine + H(+). It carries out the reaction 1-O-(1Z-octadecenyl)-sn-glycero-3-phospho-N-hexadecanoyl-ethanolamine + H2O = 1-O-(1Z-octadecenyl)-sn-glycero-3-phosphate + N-hexadecanoylethanolamine + H(+). Its activity is regulated as follows. Lysophospholipase D activity is increased by magnesium and manganese and inhibited by calcium in a concentration dependent manner. Loss of lysophospholipase D activity by addition of EDTA. Functionally, hydrolyzes lysoglycerophospholipids to produce lysophosphatidic acid (LPA) and the corresponding amines. Shows a preference for 1-O-alkyl-sn-glycero-3-phosphocholine (lyso-PAF), lysophosphatidylethanolamine (lyso-PE) and lysophosphatidylcholine (lyso-PC). May be involved in bioactive N-acylethanolamine biosynthesis from both N-acyl-lysoplasmenylethanolamin (N-acyl-lysoPlsEt) and N-acyl-lysophosphatidylethanolamin (N-acyl-lysoPE). In addition, hydrolyzes glycerophospho-N-acylethanolamine to N-acylethanolamine. Does not display glycerophosphodiester phosphodiesterase activity, since it cannot hydrolyze either glycerophosphoinositol or glycerophosphocholine. The chain is Lysophospholipase D GDPD1 from Rattus norvegicus (Rat).